Here is a 178-residue protein sequence, read N- to C-terminus: Large ribosomal subunit protein uL5 (178 aa).

This sequence belongs to the universal ribosomal protein uL5 family. In terms of assembly, part of the 50S ribosomal subunit; part of the 5S rRNA/L5/L18/L25 subcomplex. Contacts the 5S rRNA and the P site tRNA. Forms a bridge to the 30S subunit in the 70S ribosome.

Its function is as follows. This is one of the proteins that bind and probably mediate the attachment of the 5S RNA into the large ribosomal subunit, where it forms part of the central protuberance. In the 70S ribosome it contacts protein S13 of the 30S subunit (bridge B1b), connecting the 2 subunits; this bridge is implicated in subunit movement. Contacts the P site tRNA; the 5S rRNA and some of its associated proteins might help stabilize positioning of ribosome-bound tRNAs. This chain is Large ribosomal subunit protein uL5, found in Acinetobacter baylyi (strain ATCC 33305 / BD413 / ADP1).